The sequence spans 274 residues: Large ribosomal subunit protein uL2 (274 aa).

Disordered stretches follow at residues alanine 28–glycine 55 and valine 224–lysine 274. Over residues lysine 263 to lysine 274 the composition is skewed to basic and acidic residues.

The protein belongs to the universal ribosomal protein uL2 family. In terms of assembly, part of the 50S ribosomal subunit. Forms a bridge to the 30S subunit in the 70S ribosome.

Functionally, one of the primary rRNA binding proteins. Required for association of the 30S and 50S subunits to form the 70S ribosome, for tRNA binding and peptide bond formation. It has been suggested to have peptidyltransferase activity; this is somewhat controversial. Makes several contacts with the 16S rRNA in the 70S ribosome. In Pseudomonas fluorescens (strain ATCC BAA-477 / NRRL B-23932 / Pf-5), this protein is Large ribosomal subunit protein uL2.